The following is a 123-amino-acid chain: Large ribosomal subunit protein bL12 (123 aa).

The protein belongs to the bacterial ribosomal protein bL12 family. Homodimer. Part of the ribosomal stalk of the 50S ribosomal subunit. Forms a multimeric L10(L12)X complex, where L10 forms an elongated spine to which 2 to 4 L12 dimers bind in a sequential fashion. Binds GTP-bound translation factors.

Forms part of the ribosomal stalk which helps the ribosome interact with GTP-bound translation factors. Is thus essential for accurate translation. The polypeptide is Large ribosomal subunit protein bL12 (Dehalococcoides mccartyi (strain ATCC BAA-2100 / JCM 16839 / KCTC 5957 / BAV1)).